A 128-amino-acid polypeptide reads, in one-letter code: Iron-sulfur cluster insertion protein ErpA (128 aa).

3 residues coordinate iron-sulfur cluster: Cys-56, Cys-120, and Cys-122.

It belongs to the HesB/IscA family. Homodimer. Requires iron-sulfur cluster as cofactor.

Required for insertion of 4Fe-4S clusters for at least IspG. The chain is Iron-sulfur cluster insertion protein ErpA from Xanthomonas campestris pv. campestris (strain 8004).